The sequence spans 190 residues: Protein PLANT CADMIUM RESISTANCE 8 (190 aa).

The interval 1–31 is disordered; sequence MGRVTTPSEEDSNNGLPVQQPGTPNQRTRVP. A compositionally biased stretch (polar residues) spans 13-28; that stretch reads NNGLPVQQPGTPNQRT. T23 is modified (phosphothreonine). A helical transmembrane segment spans residues 94–113; the sequence is LGTFMYLLMMPALCSHWVMG.

The protein belongs to the cornifelin family.

Its subcellular location is the cell membrane. Functionally, may be involved in heavy metals transport. This is Protein PLANT CADMIUM RESISTANCE 8 (PCR8) from Arabidopsis thaliana (Mouse-ear cress).